The chain runs to 827 residues: Periplasmic nitrate reductase (827 aa).

Residues 1–34 constitute a signal peptide (tat-type signal); that stretch reads MSLTRRDFIKANAVAATAAAAGIATPAIAQPAKA. The 57-residue stretch at 36–92 folds into the 4Fe-4S Mo/W bis-MGD-type domain; the sequence is IRWDKGVCRFCGTGCAVLVGVQDGRVVATQGDPDSPVNRGLNCIKGYFLSKIMYGED. 4 residues coordinate [4Fe-4S] cluster: Cys43, Cys46, Cys50, and Cys78. Mo-bis(molybdopterin guanine dinucleotide) is bound by residues Lys80, Gln148, Asn173, Cys177, 210 to 217, 241 to 245, 260 to 262, Met371, Gln375, Asn481, 507 to 508, Lys530, Asp557, and 717 to 726; these read WGSNMAEM, STFEH, QTD, SD, and TGRVLEHWHS. Position 793 (Phe793) interacts with substrate. Residues Asn801 and Lys818 each contribute to the Mo-bis(molybdopterin guanine dinucleotide) site.

It belongs to the prokaryotic molybdopterin-containing oxidoreductase family. NasA/NapA/NarB subfamily. Component of the periplasmic nitrate reductase NapAB complex composed of NapA and NapB. The cofactor is [4Fe-4S] cluster. Mo-bis(molybdopterin guanine dinucleotide) is required as a cofactor. Predicted to be exported by the Tat system. The position of the signal peptide cleavage has not been experimentally proven.

It is found in the periplasm. It catalyses the reaction 2 Fe(II)-[cytochrome] + nitrate + 2 H(+) = 2 Fe(III)-[cytochrome] + nitrite + H2O. Functionally, catalytic subunit of the periplasmic nitrate reductase complex NapAB. Receives electrons from NapB and catalyzes the reduction of nitrate to nitrite. The sequence is that of Periplasmic nitrate reductase from Paramagnetospirillum magneticum (strain ATCC 700264 / AMB-1) (Magnetospirillum magneticum).